The primary structure comprises 455 residues: Golgi pH regulator (455 aa).

The next 5 membrane-spanning stretches (helical) occupy residues 5–25 (IDSS…WLFF), 46–66 (VTFA…LGVL), 79–99 (LCVI…YFIV), 114–134 (CLLW…FPIL), and 150–170 (VGVI…VNCP). 2 N-linked (GlcNAc...) asparagine glycosylation sites follow: N180 and N243. A run of 4 helical transmembrane segments spans residues 290-310 (GYFF…NIVF), 343-363 (ISFI…LITL), 378-398 (VIVL…VLLI), and 425-445 (WFDV…YLAH).

It belongs to the Golgi pH regulator (TC 1.A.38) family. In terms of assembly, homotrimer. Interacts with RABL3; the interaction stabilizes GPR89A.

The protein localises to the golgi apparatus membrane. It carries out the reaction iodide(out) = iodide(in). The enzyme catalyses chloride(in) = chloride(out). It catalyses the reaction bromide(in) = bromide(out). The catalysed reaction is fluoride(in) = fluoride(out). Voltage-gated channel that enables the transfer of monoatomic anions such as iodide, chloride, bromide and fluoride which may function in counter-ion conductance and participates in Golgi acidification. Plays a role in lymphocyte development, probably by acting as a RABL3 effector in hematopoietic cells. The protein is Golgi pH regulator of Bos taurus (Bovine).